The following is a 339-amino-acid chain: MAGSTSSLVICAIGIYATFLTWALVQEPLATRTWPNSMGKFQFPNVISLIQASVAMMMGYLYLNWKKVEYPPRKMIKDHWKQLMLISFTQSSSGPLATTSLKHVDYLTYMLAKSCKMIPVLLVHLLLYRTPIASQKKVVALLVSLGVTIFTIGGNDGKKLKRSFNESGNDNKLQGFGLLFSSLFLDGLTNATQDKLLKANKAKEKGKQTLITGAHLMFTLNLFVILWNILYFIVIDCKQWDNAVSVLTMDPQVWGYLMLYSFCGAMGQCFIFYTLEQFGSLVLIMITVTRKMVSMILSIIVFGKSVRFQQWVGMFIVFGGITWEALNKKKANIPKAKSA.

Topologically, residues 1–4 (MAGS) are lumenal. A helical transmembrane segment spans residues 5 to 25 (TSSLVICAIGIYATFLTWALV). The Cytoplasmic portion of the chain corresponds to 26-42 (QEPLATRTWPNSMGKFQ). The chain crosses the membrane as a helical span at residues 43–63 (FPNVISLIQASVAMMMGYLYL). Over 64-106 (NWKKVEYPPRKMIKDHWKQLMLISFTQSSSGPLATTSLKHVDY) the chain is Lumenal. Residues 107 to 127 (LTYMLAKSCKMIPVLLVHLLL) traverse the membrane as a helical segment. Residues 128–136 (YRTPIASQK) are Cytoplasmic-facing. The chain crosses the membrane as a helical span at residues 137–157 (KVVALLVSLGVTIFTIGGNDG). Residues 158–174 (KKLKRSFNESGNDNKLQ) lie on the Lumenal side of the membrane. The N-linked (GlcNAc...) asparagine glycan is linked to N165. A helical membrane pass occupies residues 175 to 192 (GFGLLFSSLFLDGLTNAT). Over 193-214 (QDKLLKANKAKEKGKQTLITGA) the chain is Cytoplasmic. Residues 215–235 (HLMFTLNLFVILWNILYFIVI) traverse the membrane as a helical segment. The Lumenal portion of the chain corresponds to 236-245 (DCKQWDNAVS). A helical transmembrane segment spans residues 246–266 (VLTMDPQVWGYLMLYSFCGAM). Residues 267 to 280 (GQCFIFYTLEQFGS) lie on the Cytoplasmic side of the membrane. Residues 281–303 (LVLIMITVTRKMVSMILSIIVFG) form a helical membrane-spanning segment. At 304–307 (KSVR) the chain is on the lumenal side. A helical transmembrane segment spans residues 308-327 (FQQWVGMFIVFGGITWEALN). At 328–339 (KKKANIPKAKSA) the chain is on the cytoplasmic side.

It belongs to the nucleotide-sugar transporter family. SLC35B subfamily.

It localises to the endoplasmic reticulum membrane. Its function is as follows. May be involved in specific transport of UDP-Gal from the cytosol to the Golgi lumen. Involved in the maintenance of optimal conditions for the folding of secretory pathway proteins in the endoplasmic reticulum. Overexpression confers resistance to the immunosuppressive drug, leflunomide. The sequence is that of UDP-galactose transporter homolog 1 (HUT1) from Saccharomyces cerevisiae (strain ATCC 204508 / S288c) (Baker's yeast).